The primary structure comprises 623 residues: Protein skinhead-1 (623 aa).

Disordered regions lie at residues Met1–Val29, Thr158–Ser184, Tyr421–Thr451, and Gln467–Asp557. Ser164 is modified (phosphoserine; by pmk-1). Over residues Glu173–Ser184 the composition is skewed to polar residues. Position 430 is a phosphoserine; by pmk-1 (Ser430). Composition is skewed to low complexity over residues Gly435 to Ser449, Ser472 to Thr498, and Pro511 to Ser529. Positions Ser540 to Ile623 are basic motif.

It belongs to the bZIP family. Skn1 subfamily. As to quaternary structure, monomer. Interacts with GATA factor elt-3; interaction may enhance transcriptional activation of target genes. In terms of assembly, interacts with pgma-5. Interacts with transcription factor mxl-3 (via N-terminus). Cleaved by the aspartic protease ddi-1. In terms of tissue distribution, postembryonic intestinal cells.

The protein localises to the nucleus. The protein resides in the cytoplasm. Its subcellular location is the mitochondrion. Its function is as follows. Transcription factor. Required to specify the fate of ventral blastomeres in the early embryo, and postembryonically for the development of the intestine. Directly regulates expression of zygotically expressed med-1 and med-2 to direct mesendoderm development. In response to oxidative stress and anoxia, required to up-regulate expression of stl-1 mRNA. Involved in regulating innate immunity, acting downstream of the pmk-1 p38/MAPK pathway and probably also downstream of nipi-3. Required for the up-regulation of phase II detoxification genes, including gcs-1 and several glutathione-S-transferase mRNAs in response to oxidative stress generated during pathogenic bacterial infection. Modulates oxidative stress responses in concert with transcription factors such as hcf-1 and elt-3. Regulates the transcription of genes associated with metabolism in response to changes in nutrient availability. In neurons, involved in mitochondrial fusion and behavioral recovery during reoxygenation. Required for riok-1 mRNA expression in the intestine. Downstream of the let-60/Ras, mek-2 and pmk-1 pathway, positively regulates lifespan probably by preventing transcription of insulin-like peptides such as ins-39. Prevents degeneration of dopaminergic CEP neurons in response to high Al(3+) or Mn(2+) levels, probably by promoting the expression of glutathione-S-transferase gst-1. In terms of biological role, directed by the ER-associated degradation pathway (ERAD), mediates proteasomal homeostasis by regulating the expression of proteasomal subunits such as rpt-3 to confer resistance to proteasomal dysfunction. The protein is Protein skinhead-1 (skn-1) of Caenorhabditis elegans.